The chain runs to 179 residues: MASQNRDPAAASVAAVRKGAEPCGGAARGPVGKRLQQELMILMTSGDKGISAFPESDNLFKWVGTIHGAAGTVYEDLRYKLSLEFPSGYPYNAPTVKFLTPCYHPNVDTQGNICLDILKDKWSALYDVRTILLSIQSLLGEPNIDSPLNTHAAELWKNPTAFKKYLQETYSKQVSSQDP.

A2 is modified (N-acetylalanine). S3 is modified (phosphoserine). A UBC core domain is found at 30–175; the sequence is PVGKRLQQEL…LQETYSKQVS (146 aa). C114 functions as the Glycyl thioester intermediate in the catalytic mechanism.

The protein belongs to the ubiquitin-conjugating enzyme family. Component of the APC/C complex, composed of at least 14 distinct subunits that assemble into a complex of at least 19 chains with a combined molecular mass of around 1.2 MDa. Within this complex, directly interacts with ANAPC2. Autoubiquitinated by the APC/C complex, leading to its degradation by the proteasome. Its degradation plays a central role in APC/C regulation, allowing cyclin-A accumulation before S phase entry. APC/C substrates inhibit the autoubiquitination of UBE2C/UBCH10 but not its E2 function, hence APC/C remaining active until its substrates have been destroyed.

It catalyses the reaction S-ubiquitinyl-[E1 ubiquitin-activating enzyme]-L-cysteine + [E2 ubiquitin-conjugating enzyme]-L-cysteine = [E1 ubiquitin-activating enzyme]-L-cysteine + S-ubiquitinyl-[E2 ubiquitin-conjugating enzyme]-L-cysteine.. It carries out the reaction S-ubiquitinyl-[E1 ubiquitin-activating enzyme]-L-cysteine + [acceptor protein]-L-lysine = [E1 ubiquitin-activating enzyme]-L-cysteine + N(6)-monoubiquitinyl-[acceptor protein]-L-lysine.. It functions in the pathway protein modification; protein ubiquitination. In terms of biological role, accepts ubiquitin from the E1 complex and catalyzes its covalent attachment to other proteins. In vitro catalyzes 'Lys-11'- and 'Lys-48'-linked polyubiquitination. Acts as an essential factor of the anaphase promoting complex/cyclosome (APC/C), a cell cycle-regulated ubiquitin ligase that controls progression through mitosis. Acts by initiating 'Lys-11'-linked polyubiquitin chains on APC/C substrates, leading to the degradation of APC/C substrates by the proteasome and promoting mitotic exit. The protein is Ubiquitin-conjugating enzyme E2 C (Ube2c) of Mus musculus (Mouse).